The primary structure comprises 371 residues: Histidinol-phosphate aminotransferase (371 aa).

At Lys-228 the chain carries N6-(pyridoxal phosphate)lysine.

It belongs to the class-II pyridoxal-phosphate-dependent aminotransferase family. Histidinol-phosphate aminotransferase subfamily. The cofactor is pyridoxal 5'-phosphate.

The enzyme catalyses L-histidinol phosphate + 2-oxoglutarate = 3-(imidazol-4-yl)-2-oxopropyl phosphate + L-glutamate. The protein operates within amino-acid biosynthesis; L-histidine biosynthesis; L-histidine from 5-phospho-alpha-D-ribose 1-diphosphate: step 7/9. The sequence is that of Histidinol-phosphate aminotransferase from Methanococcus aeolicus (strain ATCC BAA-1280 / DSM 17508 / OCM 812 / Nankai-3).